Here is a 466-residue protein sequence, read N- to C-terminus: Phosphoenolpyruvate carboxykinase (ATP) (466 aa).

Substrate contacts are provided by R61, Y196, and K202. ATP is bound by residues K202, H221, and 237–245; that span reads GLSGTGKTT. K202 and H221 together coordinate Mn(2+). D258 provides a ligand contact to Mn(2+). The ATP site is built by E286, R323, and T448. Residue R323 coordinates substrate.

The protein belongs to the phosphoenolpyruvate carboxykinase (ATP) family. Mn(2+) serves as cofactor.

Its subcellular location is the cytoplasm. It catalyses the reaction oxaloacetate + ATP = phosphoenolpyruvate + ADP + CO2. It functions in the pathway carbohydrate biosynthesis; gluconeogenesis. Functionally, involved in the gluconeogenesis. Catalyzes the conversion of oxaloacetate (OAA) to phosphoenolpyruvate (PEP) through direct phosphoryl transfer between the nucleoside triphosphate and OAA. This Deinococcus radiodurans (strain ATCC 13939 / DSM 20539 / JCM 16871 / CCUG 27074 / LMG 4051 / NBRC 15346 / NCIMB 9279 / VKM B-1422 / R1) protein is Phosphoenolpyruvate carboxykinase (ATP).